The sequence spans 83 residues: Large ribosomal subunit protein bL27 (83 aa).

A disordered region spans residues 1–22; sequence MAHKKGQGSTRNGRDSHSKRLG.

The protein belongs to the bacterial ribosomal protein bL27 family.

In Protochlamydia amoebophila (strain UWE25), this protein is Large ribosomal subunit protein bL27.